The chain runs to 710 residues: Dihydroxyacetone synthase (710 aa).

Residues H78 and 128–130 (GPL) each bind thiamine diphosphate. Mg(2+)-binding residues include D169, N199, and V201. N199 contributes to the thiamine diphosphate binding site. Residues H275, E433, and F461 each coordinate thiamine diphosphate. E433 functions as the Proton donor in the catalytic mechanism. The Microbody targeting signal signature appears at 708-710 (NKL).

This sequence belongs to the transketolase family. Mg(2+) is required as a cofactor. Requires Ca(2+) as cofactor. Mn(2+) serves as cofactor. The cofactor is Co(2+). It depends on thiamine diphosphate as a cofactor.

Its subcellular location is the peroxisome. It catalyses the reaction D-xylulose 5-phosphate + formaldehyde = dihydroxyacetone + D-glyceraldehyde 3-phosphate. Functionally, this is the major methanol assimilatory enzyme from the methylotrophic Hansenula polymorpha. The protein is Dihydroxyacetone synthase (DAS) of Pichia angusta (Yeast).